The chain runs to 298 residues: HTH-type transcriptional regulator CzcR (298 aa).

Residues 11–68 (MELRDLQIFQSVADQGSVSSAAKELNYVQSNVTARIKQLENELKTPLFYRHKRGMTLT) enclose the HTH lysR-type domain. The H-T-H motif DNA-binding region spans 28-47 (VSSAAKELNYVQSNVTARIK).

Belongs to the LysR transcriptional regulatory family.

This Bacillus thuringiensis (strain Al Hakam) protein is HTH-type transcriptional regulator CzcR (czcR).